A 49-amino-acid polypeptide reads, in one-letter code: Large ribosomal subunit protein bL33 (49 aa).

The protein belongs to the bacterial ribosomal protein bL33 family.

In Natranaerobius thermophilus (strain ATCC BAA-1301 / DSM 18059 / JW/NM-WN-LF), this protein is Large ribosomal subunit protein bL33.